The following is a 197-amino-acid chain: Protein-methionine-sulfoxide reductase heme-binding subunit MsrQ (197 aa).

The next 6 helical transmembrane spans lie at 10–30, 42–62, 75–95, 110–130, 147–167, and 169–189; these read IFIVGCLFPVWWLYEAAMNLL, LGLGALTFLLVTLSMTPLQKL, LGLWVFAYIVLHILCYLFFIL, PYIIVGALGFLGLLVLAVTSN, LVYAVLGLGLLHFLWIVRSDL, and EWAIYAFIGAVLMVLRIPAVA.

It belongs to the MsrQ family. As to quaternary structure, heterodimer of a catalytic subunit (MsrP) and a heme-binding subunit (MsrQ). Requires FMN as cofactor. The cofactor is heme b.

The protein resides in the cell inner membrane. Functionally, part of the MsrPQ system that repairs oxidized periplasmic proteins containing methionine sulfoxide residues (Met-O), using respiratory chain electrons. Thus protects these proteins from oxidative-stress damage caused by reactive species of oxygen and chlorine generated by the host defense mechanisms. MsrPQ is essential for the maintenance of envelope integrity under bleach stress, rescuing a wide series of structurally unrelated periplasmic proteins from methionine oxidation. MsrQ provides electrons for reduction to the reductase catalytic subunit MsrP, using the quinone pool of the respiratory chain. The chain is Protein-methionine-sulfoxide reductase heme-binding subunit MsrQ from Pseudomonas putida (strain ATCC 47054 / DSM 6125 / CFBP 8728 / NCIMB 11950 / KT2440).